A 78-amino-acid chain; its full sequence is Small ribosomal subunit protein bS20 (78 aa).

The segment at 1–34 (MANIKSNLKRNKQNRARHTVVHSQTSAVKTQIKK) is disordered. The span at 7–20 (NLKRNKQNRARHTV) shows a compositional bias: basic residues. The span at 21–34 (VHSQTSAVKTQIKK) shows a compositional bias: polar residues.

This sequence belongs to the bacterial ribosomal protein bS20 family.

In terms of biological role, binds directly to 16S ribosomal RNA. The polypeptide is Small ribosomal subunit protein bS20 (Malacoplasma penetrans (strain HF-2) (Mycoplasma penetrans)).